Consider the following 367-residue polypeptide: 3-dehydroquinate synthase (367 aa).

Residues 112 to 116 (GVIGD), 136 to 137 (TT), Lys149, Lys158, and 176 to 179 (TLKT) each bind NAD(+). The Zn(2+) site is built by Glu191, His256, and His273.

The protein belongs to the sugar phosphate cyclases superfamily. Dehydroquinate synthase family. It depends on NAD(+) as a cofactor. Requires Co(2+) as cofactor. Zn(2+) serves as cofactor.

Its subcellular location is the cytoplasm. It catalyses the reaction 7-phospho-2-dehydro-3-deoxy-D-arabino-heptonate = 3-dehydroquinate + phosphate. It functions in the pathway metabolic intermediate biosynthesis; chorismate biosynthesis; chorismate from D-erythrose 4-phosphate and phosphoenolpyruvate: step 2/7. In terms of biological role, catalyzes the conversion of 3-deoxy-D-arabino-heptulosonate 7-phosphate (DAHP) to dehydroquinate (DHQ). The polypeptide is 3-dehydroquinate synthase (Prochlorococcus marinus (strain SARG / CCMP1375 / SS120)).